Reading from the N-terminus, the 61-residue chain is Large ribosomal subunit protein uL30 (61 aa).

Belongs to the universal ribosomal protein uL30 family. As to quaternary structure, part of the 50S ribosomal subunit.

The chain is Large ribosomal subunit protein uL30 from Chlorobium limicola (strain DSM 245 / NBRC 103803 / 6330).